The following is a 467-amino-acid chain: Cytochrome c-552 (467 aa).

The first 27 residues, 1–27, serve as a signal peptide directing secretion; that stretch reads MMKKMTGKSFALSALVAASFMAAGAMA. Residue histidine 87 participates in heme c binding. Cysteine 115, cysteine 118, and lysine 119 together coordinate heme. Positions 153, 156, 157, 195, 198, and 199 each coordinate heme c. Glutamate 201, tyrosine 202, lysine 250, and glutamine 252 together coordinate Ca(2+). Tyrosine 202 serves as a coordination point for substrate. Histidine 253 is a binding site for substrate. 9 residues coordinate heme c: histidine 264, cysteine 271, cysteine 274, histidine 275, histidine 290, cysteine 303, cysteine 306, histidine 307, and histidine 382.

It belongs to the cytochrome c-552 family. Ca(2+) is required as a cofactor. Heme c serves as cofactor.

It localises to the periplasm. The catalysed reaction is 6 Fe(III)-[cytochrome c] + NH4(+) + 2 H2O = 6 Fe(II)-[cytochrome c] + nitrite + 8 H(+). The protein operates within nitrogen metabolism; nitrate reduction (assimilation). Its function is as follows. Catalyzes the reduction of nitrite to ammonia, consuming six electrons in the process. In Shewanella sp. (strain W3-18-1), this protein is Cytochrome c-552.